The primary structure comprises 1107 residues: MAHLEQFGRVSRLSYSRIKEPVELPNLIQIQKNSYDWFLEHGLREALQEVFPISDFTGNLELGFLDYSMGEPKYSINECKERDVSYQAPLKLKVRLTDKENGEIKESEVYMGDLPLMTEKGTFIINGAERVVVSQLVKSPGVYFNERMDVAGHPLFGATIIPNRGAWFELEMDSAGLVYTRIDKTRKIPVTVLLRALGYESNEVILDMYDGDETIARTLEKDTSTNKKEALIEFYRRLRPGELATEDAAEQLLKNLFFDPRRYDMAAVGRYKVNKKLGLNIPPENRHLTLEDITATIGYLLKLIKGEGKTDVIDHLGNRRLRSIGELLQNQFRTGLVRMERVVRERMSIHDVETLTPQVLINIRPITAAVKEFFGSSQLSQFMDQTNPLAELTHKRRLSALGPGGLTRERAGFQVRDVHHSHYGRICPIETPEGPNIGLIGYLATFGQVNDFGFIETPYRKVDKKLGRVLNEIVYLSADEEDEYYVAQANAPLDENGYFIEEKVEARYFEEILEIPKNRVDYMDVSPKQVFSVATALIPFLENDDANRALMGANMQRQAVPLVKTEAPIVGTGLEHKAARDSGAVVIAKKAGTVKKASASRISIEKDDGTIDNYELLKFMRSNQGTCYNQRPIVKVGERVEANEVIADGPSTEQGELALGRNVMVAFMPWEGYNYEDAILISEKLVKDDVFTSIHIEEYECEARDTKLGSEEITRDIPNVSEDMLKNLDDQGVIRVGAEVRPDDILVGKVTPKGETELTPEERLLRAIFGEKAREVRDSSLRVPHGEAGKVVAVKRFSREKGDELPPGVNQLVRVYIAQKRKISEGDKMAGRHGNKGVISRILPEEDMPFLEDGTPVEIVLNPLGVPSRMNIGQILECHMGWAARALGLNIATPVFDGANEEDIFTKLREASLLESGKTILFDGRTGEKFKHEITVGYVYMLKLAHLVDDKIHARSIGPYSLVTQQPLGGKAQFGGQRFGEMEVWALEAYGSSYTLQEILTVKSDDVAGRLKTYESIVKGENIPEPGVPEGFKVLIKELQSLALDVRILAGDDHEILIKDNDNEGNEKEKARELGLDLPDNPVGRMLEITQPIENAEQDVELKSSPK.

Positions D1062–G1075 are enriched in basic and acidic residues. A disordered region spans residues D1062 to N1081.

It belongs to the RNA polymerase beta chain family. As to quaternary structure, the RNAP catalytic core consists of 2 alpha, 1 beta, 1 beta' and 1 omega subunit. When a sigma factor is associated with the core the holoenzyme is formed, which can initiate transcription.

It carries out the reaction RNA(n) + a ribonucleoside 5'-triphosphate = RNA(n+1) + diphosphate. In terms of biological role, DNA-dependent RNA polymerase catalyzes the transcription of DNA into RNA using the four ribonucleoside triphosphates as substrates. This Syntrophomonas wolfei subsp. wolfei (strain DSM 2245B / Goettingen) protein is DNA-directed RNA polymerase subunit beta.